Consider the following 169-residue polypeptide: Putative ribonuclease VapC50 (169 aa).

Its function is as follows. Toxic component of a type II toxin-antitoxin (TA) system. An RNase. The cognate antitoxin is VapB50. In Mycobacterium tuberculosis (strain ATCC 25618 / H37Rv), this protein is Putative ribonuclease VapC50.